Here is a 374-residue protein sequence, read N- to C-terminus: MAYLERASPTLKETLLKIYRAEKPIEVDQHFHEFGSIEYHIKYSVSDPNIVHVSTSTLLETQGAVTLKEISSYTYEVIKNIGVGVIDIVDPPRLGFQLTLGLNLDNIPRGKEAIKIITRISELQAIILSSQLKEMLRSLNFQDDSRSINNMPIRIVYHPSEPFYVFKQPEKITAVFPMNFKDNSDVVIATSFFQELVEVGSQKDMGKAPQCSWSPIPPLQLRGEPVQDLTTNSGFVSFDITSRHIEGKRLDKTVWNLLNFYACAKYHIKCSRGYIQRRMRKRMETLVKLLNNTSLEEEAAQNENGRCKYVKEFVKVPKGKLMMKQRCKEMTRRVKISKFRIKINGCARFRFNQRWISLPKFSSKPSDKSYTKLD.

It belongs to the ARPC2 family. As to quaternary structure, component of the Arp2/3 complex composed of ARP2, ARP3, ARPC1/p41-ARC, ARPC2/p34-ARC, ARPC3/p21-ARC, ARPC4/p20-ARC and ARPC5/p16-ARC. In terms of tissue distribution, expressed at low levels in all tissues with a relatively highest expression in inflorescences.

It is found in the cytoplasm. The protein localises to the cytoskeleton. Its subcellular location is the cell projection. In terms of biological role, functions as actin-binding component of the Arp2/3 complex which is involved in regulation of actin polymerization and together with an activating nucleation-promoting factor (NPF) mediates the formation of branched actin networks. Seems to contact the mother actin filament. Arp2/3 complex plays a critical role in the control of cell morphogenesis via the modulation of cell polarity development. This chain is Actin-related protein 2/3 complex subunit 2B (ARPC2B), found in Arabidopsis thaliana (Mouse-ear cress).